A 238-amino-acid polypeptide reads, in one-letter code: Large ribosomal subunit protein uL2 (238 aa).

The interval 199–238 is disordered; sequence PHGGGLHQSVSRPSTVSRNAPPGRKVGHIAARRTGRKEGA. Residues 206–216 show a composition bias toward polar residues; the sequence is QSVSRPSTVSR. Basic residues predominate over residues 223-238; that stretch reads KVGHIAARRTGRKEGA.

Belongs to the universal ribosomal protein uL2 family. As to quaternary structure, part of the 50S ribosomal subunit. Forms a bridge to the 30S subunit in the 70S ribosome.

One of the primary rRNA binding proteins. Required for association of the 30S and 50S subunits to form the 70S ribosome, for tRNA binding and peptide bond formation. It has been suggested to have peptidyltransferase activity; this is somewhat controversial. Makes several contacts with the 16S rRNA in the 70S ribosome. In Sulfurisphaera tokodaii (strain DSM 16993 / JCM 10545 / NBRC 100140 / 7) (Sulfolobus tokodaii), this protein is Large ribosomal subunit protein uL2.